The sequence spans 321 residues: Lipoyl synthase (321 aa).

Residues cysteine 68, cysteine 73, cysteine 79, cysteine 94, cysteine 98, cysteine 101, and serine 308 each coordinate [4Fe-4S] cluster. Positions 80–297 constitute a Radical SAM core domain; that stretch reads FNHGTATFMI…KVLADELGFT (218 aa).

The protein belongs to the radical SAM superfamily. Lipoyl synthase family. [4Fe-4S] cluster serves as cofactor.

The protein localises to the cytoplasm. It catalyses the reaction [[Fe-S] cluster scaffold protein carrying a second [4Fe-4S](2+) cluster] + N(6)-octanoyl-L-lysyl-[protein] + 2 oxidized [2Fe-2S]-[ferredoxin] + 2 S-adenosyl-L-methionine + 4 H(+) = [[Fe-S] cluster scaffold protein] + N(6)-[(R)-dihydrolipoyl]-L-lysyl-[protein] + 4 Fe(3+) + 2 hydrogen sulfide + 2 5'-deoxyadenosine + 2 L-methionine + 2 reduced [2Fe-2S]-[ferredoxin]. It functions in the pathway protein modification; protein lipoylation via endogenous pathway; protein N(6)-(lipoyl)lysine from octanoyl-[acyl-carrier-protein]: step 2/2. Its function is as follows. Catalyzes the radical-mediated insertion of two sulfur atoms into the C-6 and C-8 positions of the octanoyl moiety bound to the lipoyl domains of lipoate-dependent enzymes, thereby converting the octanoylated domains into lipoylated derivatives. The chain is Lipoyl synthase from Shewanella sp. (strain MR-7).